We begin with the raw amino-acid sequence, 135 residues long: Succinate dehydrogenase assembly factor 2, mitochondrial (135 aa).

It belongs to the SDHAF2 family. Interacts with the flavoprotein subunit within the SDH catalytic dimer.

It is found in the mitochondrion matrix. Its function is as follows. Plays an essential role in the assembly of succinate dehydrogenase (SDH), an enzyme complex (also referred to as respiratory complex II) that is a component of both the tricarboxylic acid (TCA) cycle and the mitochondrial electron transport chain, and which couples the oxidation of succinate to fumarate with the reduction of ubiquinone (coenzyme Q) to ubiquinol. Required for flavinylation (covalent attachment of FAD) of the flavoprotein subunit of the SDH catalytic dimer. In Meyerozyma guilliermondii (strain ATCC 6260 / CBS 566 / DSM 6381 / JCM 1539 / NBRC 10279 / NRRL Y-324) (Yeast), this protein is Succinate dehydrogenase assembly factor 2, mitochondrial.